The primary structure comprises 399 residues: MAQRNCWRRSWLGVGGGLCLGAHGAARGPRQLFHLTAKQSSAASDAKCRRWRAAGRGGGAGGVYNGRGAAAGSRQTSGMAHNEHPHYKFFESKKASLVMAPFSGGQGKSGVEDGPKYLLKQGLREGVEGLGWEIEVQRPLDGHDFEERKQRATEVVGRAKNPTLVGEATHLIHDAVRAAAHAGRLPVTLGGDHSIAIGTVSGVLDRYPDAGLLWVDAHADINTLASTESGNLHGCPVSFLMGLERESWPAPLAWVPGTLRPSKIAYIGLRDVDPEEKEILRRLGITAFSMYHVDRYGINKVVEMALAAINPDGTGPVMVSYDVDAIDPMYVPATGTPVRGGLTLREGLFIVERVAETGNLVALDVVECNPELAAHDLHVVDTVQTGCSIARCALGETLL.

Residues H193, D216, H218, and D220 each coordinate Mn(2+). Substrate is bound by residues 218–222 (HADIN), 229–231 (SGN), and D273. The Mn(2+) site is built by D322 and D324. T336 and E367 together coordinate substrate.

The protein belongs to the arginase family. Mn(2+) serves as cofactor.

The protein localises to the cytoplasm. The catalysed reaction is L-arginine + H2O = urea + L-ornithine. It participates in nitrogen metabolism; urea cycle; L-ornithine and urea from L-arginine: step 1/1. This chain is Arginase (CAR1), found in Eremothecium gossypii (strain ATCC 10895 / CBS 109.51 / FGSC 9923 / NRRL Y-1056) (Yeast).